Reading from the N-terminus, the 323-residue chain is Syntaxin-42 (323 aa).

The Cytoplasmic portion of the chain corresponds to methionine 1–alanine 302. In terms of domain architecture, t-SNARE coiled-coil homology spans glutamine 227–alanine 289. Residues threonine 303 to phenylalanine 323 traverse the membrane as a helical; Anchor for type IV membrane protein segment.

This sequence belongs to the syntaxin family. Interacts with VTI12 and SYP61 to form a t-SNARE complex and with VPS45. As to expression, expressed at low levels in roots, stems, flowers and leaves.

Its subcellular location is the golgi apparatus. The protein localises to the trans-Golgi network membrane. In terms of biological role, contributes to the regulation of secretory and vacuolar transport pathways in the post-Golgi network, and to the maintenance of the Golgi apparatus and trans-Golgi network (TGN) morphologies. Vesicle trafficking protein that functions in the secretory pathway and mediates liposome fusion. Required for extracellular resistance responses to a fungal pathogen. Also involved in the protection of chloroplasts from salicylic acid-dependent biotic stress. This chain is Syntaxin-42, found in Arabidopsis thaliana (Mouse-ear cress).